Reading from the N-terminus, the 727-residue chain is DNA replication licensing factor MCM5 (727 aa).

Residues valine 325 to isoleucine 531 enclose the MCM domain. ATP is bound at residue glycine 375–serine 382. An Arginine finger motif is present at residues serine 507–aspartate 510.

This sequence belongs to the MCM family. Component of the minichromosome maintenance (MCM) complex, a heterotetramer composed of MCM2, MCM3, MCM4, MCM5, MCM6 and MCM7. Interacts with EGT1. In terms of tissue distribution, expressed in shoot apex and flower buds.

The protein localises to the nucleus. The protein resides in the cytoplasm. It catalyses the reaction ATP + H2O = ADP + phosphate + H(+). Its function is as follows. Probable component of the MCM2-7 complex (MCM complex) that may function as a DNA helicase and which is essential to undergo a single round of replication initiation and elongation per cell cycle in eukaryotic cells. The protein is DNA replication licensing factor MCM5 (MCM5) of Arabidopsis thaliana (Mouse-ear cress).